Consider the following 257-residue polypeptide: Short chain dehydrogenase ausX (257 aa).

NADP(+) contacts are provided by isoleucine 11, aspartate 57, arginine 119, tyrosine 151, lysine 155, and valine 184. Catalysis depends on tyrosine 151, which acts as the Proton acceptor. The Lowers pKa of active site Tyr role is filled by lysine 155.

Belongs to the short-chain dehydrogenases/reductases (SDR) family.

Its pathway is secondary metabolite biosynthesis; terpenoid biosynthesis. Short chain dehydrogenase; part of the gene cluster that mediates the biosynthesis of calidodehydroaustin, a fungal meroterpenoid. The first step of the pathway is the synthesis of 3,5-dimethylorsellinic acid by the polyketide synthase ausA. 3,5-dimethylorsellinic acid is then prenylated by the polyprenyl transferase ausN. Further epoxidation by the FAD-dependent monooxygenase ausM and cyclization by the probable terpene cyclase ausL lead to the formation of protoaustinoid A. Protoaustinoid A is then oxidized to spiro-lactone preaustinoid A3 by the combined action of the FAD-binding monooxygenases ausB and ausC, and the dioxygenase ausE. Acid-catalyzed keto-rearrangement and ring contraction of the tetraketide portion of preaustinoid A3 by ausJ lead to the formation of preaustinoid A4. The aldo-keto reductase ausK, with the help of ausH, is involved in the next step by transforming preaustinoid A4 into isoaustinone which is in turn hydroxylated by the P450 monooxygenase ausI to form austinolide. The cytochrome P450 monooxygenase ausG modifies austinolide to austinol. Austinol is further acetylated to austin by the O-acetyltransferase ausP, which spontaneously changes to dehydroaustin. The cytochrome P450 monooxygenase ausR then converts dehydroaustin is into 7-dehydrodehydroaustin. The hydroxylation catalyzed by ausR permits the O-acetyltransferase ausQ to add an additional acetyl group to the molecule, leading to the formation of acetoxydehydroaustin. The short chain dehydrogenase ausT catalyzes the reduction of the double bond present between carbon atoms 1 and 2 to convert 7-dehydrodehydroaustin into 1,2-dihydro-7-hydroxydehydroaustin. AusQ catalyzes not only an acetylation reaction but also the addition of the PKS ausV diketide product to 1,2-dihydro-7-hydroxydehydroaustin, forming precalidodehydroaustin. Finally, the iron/alpha-ketoglutarate-dependent dioxygenase converts precalidodehydroaustin into calidodehydroaustin. The polypeptide is Short chain dehydrogenase ausX (Aspergillus calidoustus).